Here is a 78-residue protein sequence, read N- to C-terminus: Small ribosomal subunit protein bS18c (78 aa).

The protein belongs to the bacterial ribosomal protein bS18 family. In terms of assembly, part of the 30S ribosomal subunit.

Its subcellular location is the plastid. It is found in the chloroplast. This Oltmannsiellopsis viridis (Marine flagellate) protein is Small ribosomal subunit protein bS18c.